A 348-amino-acid polypeptide reads, in one-letter code: Outer membrane protein assembly factor BamC (348 aa).

The signal sequence occupies residues 1–24 (MATLLQTSKVMKVAGLSLVVFLAA). The N-palmitoyl cysteine moiety is linked to residue Cys-25. Cys-25 is lipidated: S-diacylglycerol cysteine. The interval 211–230 (SQQQEEAGQNNAKDSGALTV) is disordered.

It belongs to the BamC family. In terms of assembly, part of the Bam complex, which is composed of the outer membrane protein BamA, and four lipoproteins BamB, BamC, BamD and BamE.

It is found in the cell outer membrane. In terms of biological role, part of the outer membrane protein assembly complex, which is involved in assembly and insertion of beta-barrel proteins into the outer membrane. This Xenorhabdus nematophila (strain ATCC 19061 / DSM 3370 / CCUG 14189 / LMG 1036 / NCIMB 9965 / AN6) protein is Outer membrane protein assembly factor BamC.